A 168-amino-acid polypeptide reads, in one-letter code: Peptidoglycan-associated lipoprotein (168 aa).

The N-terminal stretch at 1–24 (MRRIQSIARSPIAIALFMSLAVAG) is a signal peptide. C25 carries the N-palmitoyl cysteine lipid modification. The S-diacylglycerol cysteine moiety is linked to residue C25. Residues 51–167 (QDFTVNVGDR…RAVTVLNGAG (117 aa)) enclose the OmpA-like domain.

It belongs to the Pal lipoprotein family. The Tol-Pal system is composed of five core proteins: the inner membrane proteins TolA, TolQ and TolR, the periplasmic protein TolB and the outer membrane protein Pal. They form a network linking the inner and outer membranes and the peptidoglycan layer. In terms of processing, the N-terminus is blocked.

It localises to the cell outer membrane. Its function is as follows. Part of the Tol-Pal system, which plays a role in outer membrane invagination during cell division and is important for maintaining outer membrane integrity. This chain is Peptidoglycan-associated lipoprotein, found in Brucella abortus biovar 1 (strain 9-941).